Consider the following 503-residue polypeptide: MEKLLALIVVLVILLSLALFYLCNILWLRAVKIRKKLRRQGIRGPKPTFLYGNTKEIKRIRQELKFSQKQGTNNFISTLFPHFLLCRETYGPVFLYSTGALEILQVSHPDMVKDIGRWTPSELGKPNYLKKSRKALFGGGLFTENGDEWAYQRKIIAPEFFMDKIKGMIQLIEDATVTVLEAWEDMIDDVGGCREIVVDDYLRNLSADVIARACFGSSFTKGEEIFCKLRQLQKVIAQQDSFVGLSALWKYLPTKSNQEIQMLDEQVRLLILDVAKEQHHYQDSHNSLVNAIIDGAQDGRSAAEAEDFIVGNCKTIYFGGHESTAVTAIWCLMLLATHSEAMEVCRGRSTLDVDALRRLKIVTMVIQETLRLYPPASVMMQEALTDVKLGNIEVPRGTIVQVPRLMLHLDKEAWGADADEFRPDRFANGVAAACRAAHMYVPFGHGPRTCIGQNLAMAELKVVLARLLTKFAFSPSPRYRHSPAFRLTIEPGFGLPLMVTKLP.

Residues 1–6 (MEKLLA) are Lumenal-facing. The chain crosses the membrane as a helical; Signal-anchor for type III membrane protein span at residues 7 to 27 (LIVVLVILLSLALFYLCNILW). At 28–503 (LRAVKIRKKL…GLPLMVTKLP (476 aa)) the chain is on the cytoplasmic side. Cys450 is a heme binding site.

The protein belongs to the cytochrome P450 family. Heme is required as a cofactor.

The protein resides in the membrane. Functionally, probably not involved in gibberellin metabolism since over-expression of CYP714C1 in a heterologous system does not induce semi-dwarfism. The protein is Cytochrome P450 714C1 (CYP714C1) of Oryza sativa subsp. japonica (Rice).